Here is a 1391-residue protein sequence, read N- to C-terminus: DNA-directed RNA polymerase subunit beta'' (1391 aa).

Residues Cys-220, Cys-291, Cys-298, and Cys-301 each contribute to the Zn(2+) site.

It belongs to the RNA polymerase beta' chain family. RpoC2 subfamily. In terms of assembly, in plastids the minimal PEP RNA polymerase catalytic core is composed of four subunits: alpha, beta, beta', and beta''. When a (nuclear-encoded) sigma factor is associated with the core the holoenzyme is formed, which can initiate transcription. Zn(2+) is required as a cofactor.

It localises to the plastid. The protein localises to the chloroplast. The enzyme catalyses RNA(n) + a ribonucleoside 5'-triphosphate = RNA(n+1) + diphosphate. In terms of biological role, DNA-dependent RNA polymerase catalyzes the transcription of DNA into RNA using the four ribonucleoside triphosphates as substrates. The sequence is that of DNA-directed RNA polymerase subunit beta'' from Gossypium barbadense (Sea Island cotton).